The chain runs to 428 residues: UPF0229 protein YeaH (428 aa).

The span at 78-90 (GNDHFIQNDRIER) shows a compositional bias: basic and acidic residues. The interval 78–111 (GNDHFIQNDRIERPQGGGGGGSGSGQGQASQDGE) is disordered. The segment covering 92–103 (QGGGGGGSGSGQ) has biased composition (gly residues).

The protein belongs to the UPF0229 family.

In Salmonella paratyphi C (strain RKS4594), this protein is UPF0229 protein YeaH.